A 312-amino-acid polypeptide reads, in one-letter code: Glyoxylate/hydroxypyruvate reductase A (312 aa).

R227 is an active-site residue. H275 (proton donor) is an active-site residue.

This sequence belongs to the D-isomer specific 2-hydroxyacid dehydrogenase family. GhrA subfamily.

The protein resides in the cytoplasm. It catalyses the reaction glycolate + NADP(+) = glyoxylate + NADPH + H(+). The enzyme catalyses (R)-glycerate + NAD(+) = 3-hydroxypyruvate + NADH + H(+). The catalysed reaction is (R)-glycerate + NADP(+) = 3-hydroxypyruvate + NADPH + H(+). Its function is as follows. Catalyzes the NADPH-dependent reduction of glyoxylate and hydroxypyruvate into glycolate and glycerate, respectively. The sequence is that of Glyoxylate/hydroxypyruvate reductase A from Salmonella enteritidis PT4 (strain P125109).